The following is a 346-amino-acid chain: Holliday junction branch migration complex subunit RuvB (346 aa).

Positions 1-11 (MTEQRTIASSA) are enriched in polar residues. Positions 1–20 (MTEQRTIASSATREDEAADA) are disordered. Residues 1-183 (MTEQRTIASS…FGIVQRLEFY (183 aa)) form a large ATPase domain (RuvB-L) region. ATP contacts are provided by residues Ile22, Arg23, Gly64, Lys67, Thr68, Thr69, 130–132 (EDF), Arg173, Tyr183, and Arg220. Position 68 (Thr68) interacts with Mg(2+). The interval 184–254 (SPQELTRIVI…VAQAAMQMLK (71 aa)) is small ATPAse domain (RuvB-S). Positions 257-346 (PEGFDELDRR…PAIGEPGDLF (90 aa)) are head domain (RuvB-H). Positions 293, 312, and 317 each coordinate DNA.

This sequence belongs to the RuvB family. Homohexamer. Forms an RuvA(8)-RuvB(12)-Holliday junction (HJ) complex. HJ DNA is sandwiched between 2 RuvA tetramers; dsDNA enters through RuvA and exits via RuvB. An RuvB hexamer assembles on each DNA strand where it exits the tetramer. Each RuvB hexamer is contacted by two RuvA subunits (via domain III) on 2 adjacent RuvB subunits; this complex drives branch migration. In the full resolvosome a probable DNA-RuvA(4)-RuvB(12)-RuvC(2) complex forms which resolves the HJ.

It is found in the cytoplasm. It carries out the reaction ATP + H2O = ADP + phosphate + H(+). The RuvA-RuvB-RuvC complex processes Holliday junction (HJ) DNA during genetic recombination and DNA repair, while the RuvA-RuvB complex plays an important role in the rescue of blocked DNA replication forks via replication fork reversal (RFR). RuvA specifically binds to HJ cruciform DNA, conferring on it an open structure. The RuvB hexamer acts as an ATP-dependent pump, pulling dsDNA into and through the RuvAB complex. RuvB forms 2 homohexamers on either side of HJ DNA bound by 1 or 2 RuvA tetramers; 4 subunits per hexamer contact DNA at a time. Coordinated motions by a converter formed by DNA-disengaged RuvB subunits stimulates ATP hydrolysis and nucleotide exchange. Immobilization of the converter enables RuvB to convert the ATP-contained energy into a lever motion, pulling 2 nucleotides of DNA out of the RuvA tetramer per ATP hydrolyzed, thus driving DNA branch migration. The RuvB motors rotate together with the DNA substrate, which together with the progressing nucleotide cycle form the mechanistic basis for DNA recombination by continuous HJ branch migration. Branch migration allows RuvC to scan DNA until it finds its consensus sequence, where it cleaves and resolves cruciform DNA. The sequence is that of Holliday junction branch migration complex subunit RuvB from Xanthomonas campestris pv. campestris (strain 8004).